The chain runs to 130 residues: uncharacterized protein (130 aa).

Belongs to the HesB/IscA family.

This is an uncharacterized protein from Buchnera aphidicola subsp. Acyrthosiphon pisum (strain APS) (Acyrthosiphon pisum symbiotic bacterium).